The sequence spans 437 residues: MSMFLDTAKISVQAGRGGDGMVAFRREKYVPNGGPWGGDGGKGGSVIFRVDEGLRTLMDFRYNRKFKAKSGEKGMTKGMHGRGAEDLIVFVPQGTTVRDAETGKVITDLVEHGQEVVIAKGGRGGRGNIRFATPRNPAPEIAENGEPGEERQLELELKILADVGLVGFPSVGKSTLLSVVSSAKPKIGAYHFTTIVPNLGMVRTKSGDSFAMADLPGLIEGASQGVGLGTQFLRHIERTRVILHVIDMSASEGRDPYEDYVSINNELETYNLRLMERPQIIVANKMDMPEAQENLKAFKKKLAAQYDEFDDLPMIFPISSLAHQGLENLLEATAELLAKTDEFLLYDESDLVDEEAYYGFAEAEKDFEITRDDDATWVLSGEKLERLFVMTNMERDESIMKFARQLRGMGVDEALRERGAKDGDLVRIGKFEFEFVD.

An Obg domain is found at 2 to 160; sequence SMFLDTAKIS…RQLELELKIL (159 aa). The OBG-type G domain maps to 161–338; the sequence is ADVGLVGFPS…LLEATAELLA (178 aa). GTP is bound by residues 167–174, 192–196, 214–217, 284–287, and 319–321; these read GFPSVGKS, FTTIV, DLPG, NKMD, and SSL. The Mg(2+) site is built by Ser-174 and Thr-194. The OCT domain maps to 359–437; sequence GFAEAEKDFE…IGKFEFEFVD (79 aa).

The protein belongs to the TRAFAC class OBG-HflX-like GTPase superfamily. OBG GTPase family. In terms of assembly, monomer. Mg(2+) serves as cofactor.

It localises to the cytoplasm. In terms of biological role, an essential GTPase which binds GTP, GDP and possibly (p)ppGpp with moderate affinity, with high nucleotide exchange rates and a fairly low GTP hydrolysis rate. Plays a role in control of the cell cycle, stress response, ribosome biogenesis and in those bacteria that undergo differentiation, in morphogenesis control. This chain is GTPase Obg, found in Streptococcus pyogenes serotype M18 (strain MGAS8232).